Here is a 109-residue protein sequence, read N- to C-terminus: Phosphoribosyl-AMP cyclohydrolase (109 aa).

Mg(2+) is bound at residue Asp80. Cys81 contributes to the Zn(2+) binding site. Mg(2+)-binding residues include Asp82 and Asp84. Residues Cys97 and Cys104 each coordinate Zn(2+).

Belongs to the PRA-CH family. Homodimer. Mg(2+) serves as cofactor. Zn(2+) is required as a cofactor.

The protein resides in the cytoplasm. The enzyme catalyses 1-(5-phospho-beta-D-ribosyl)-5'-AMP + H2O = 1-(5-phospho-beta-D-ribosyl)-5-[(5-phospho-beta-D-ribosylamino)methylideneamino]imidazole-4-carboxamide. It participates in amino-acid biosynthesis; L-histidine biosynthesis; L-histidine from 5-phospho-alpha-D-ribose 1-diphosphate: step 3/9. Its function is as follows. Catalyzes the hydrolysis of the adenine ring of phosphoribosyl-AMP. The sequence is that of Phosphoribosyl-AMP cyclohydrolase from Clostridium beijerinckii (strain ATCC 51743 / NCIMB 8052) (Clostridium acetobutylicum).